Here is a 416-residue protein sequence, read N- to C-terminus: Phosphoribosylamine--glycine ligase (416 aa).

Residues 105–310 (KSFLKKYRIK…PLELILAATQ (206 aa)) form the ATP-grasp domain. 131 to 192 (IYSLTPPIVV…EEFLDGYELS (62 aa)) is an ATP binding site. Residues Glu281 and Asn283 each coordinate Mg(2+).

The protein belongs to the GARS family. It depends on Mg(2+) as a cofactor. The cofactor is Mn(2+).

The enzyme catalyses 5-phospho-beta-D-ribosylamine + glycine + ATP = N(1)-(5-phospho-beta-D-ribosyl)glycinamide + ADP + phosphate + H(+). It functions in the pathway purine metabolism; IMP biosynthesis via de novo pathway; N(1)-(5-phospho-D-ribosyl)glycinamide from 5-phospho-alpha-D-ribose 1-diphosphate: step 2/2. In Campylobacter jejuni subsp. jejuni serotype O:2 (strain ATCC 700819 / NCTC 11168), this protein is Phosphoribosylamine--glycine ligase.